Reading from the N-terminus, the 307-residue chain is ADP,ATP carrier protein 3 (307 aa).

Solcar repeat units lie at residues 10 to 103, 114 to 206, and 214 to 300; these read TNFA…IKLM, KWFA…LKPL, and GSFL…LQMI. The next 5 membrane-spanning stretches (helical) occupy residues 12-39, 80-104, 112-132, 182-203, and 217-237; these read FAINFLMGGVSAAIAKTAASPIERVKIL, TANVIRYFPTQALNFAFKDKIKLMF, YGKWFAGNLASGGAAGALSLL, FMPSVVGIVVYRGLYFGMFDSL, and LASFLLGWVVTTGASTCSYPL. Residues R85 and K97 each contribute to the ADP site. R241 contributes to the ADP binding site. Residues 241-246 form an important for transport activity region; that stretch reads RRRMMM. The Nucleotide carrier signature motif signature appears at 241–246; the sequence is RRRMMM. A helical transmembrane segment spans residues 277–297; sequence CGANILRSVAGAGVISMYDQL.

The protein belongs to the mitochondrial carrier (TC 2.A.29) family. As to quaternary structure, monomer.

The protein resides in the mitochondrion inner membrane. The enzyme catalyses ADP(in) + ATP(out) = ADP(out) + ATP(in). The matrix-open state (m-state) is inhibited by the membrane-permeable bongkrekic acid (BKA). The cytoplasmic-open state (c-state) is inhibited by the membrane-impermeable toxic inhibitor carboxyatractyloside (CATR). Functionally, ADP:ATP antiporter that mediates import of ADP into the mitochondrial matrix for ATP synthesis, and export of ATP out to fuel the cell. Cycles between the cytoplasmic-open state (c-state) and the matrix-open state (m-state): operates by the alternating access mechanism with a single substrate-binding site intermittently exposed to either the cytosolic (c-state) or matrix (m-state) side of the inner mitochondrial membrane. The protein is ADP,ATP carrier protein 3 (AAC3) of Saccharomyces cerevisiae (strain ATCC 204508 / S288c) (Baker's yeast).